A 248-amino-acid polypeptide reads, in one-letter code: PF03932 family protein CutC (248 aa).

It belongs to the CutC family. As to quaternary structure, homodimer.

Its subcellular location is the cytoplasm. This Shigella dysenteriae serotype 1 (strain Sd197) protein is PF03932 family protein CutC.